The sequence spans 186 residues: Ran guanine nucleotide release factor (186 aa).

The interval 27-70 is interaction with RAN; sequence DLRPVPDHQEVFCHRVTDQSLIVELLELQAHVQGEEAARYHFED.

This sequence belongs to the MOG1 family. Monomer. Interacts with RAN, both RAN-GTP and RAN-GDP. Competes with RCC1 for a common binding site on RAN and thereby inhibits RCC1-mediated nucleotide exchange. Forms a complex with RAN-GTP and RANBP1. Interacts with the cytoplasmic loop 2 of SCN5A.

It is found in the nucleus. The protein localises to the cytoplasm. It localises to the perinuclear region. The protein resides in the cell membrane. In terms of biological role, may regulate the intracellular trafficking of RAN. Promotes guanine nucleotide release from RAN and inhibits binding of new GTP by preventing the binding of the RAN guanine nucleotide exchange factor RCC1. Regulates the levels of GTP-bound RAN in the nucleus, and thereby plays a role in the regulation of RAN-dependent mitotic spindle dynamics. Enhances the expression of SCN5A at the cell membrane in cardiomyocytes. The chain is Ran guanine nucleotide release factor (RANGRF) from Bos taurus (Bovine).